A 764-amino-acid polypeptide reads, in one-letter code: Hemocyte protein-glutamine gamma-glutamyltransferase (764 aa).

Active-site residues include C343, H402, and D425. Residues N465, D467, E522, and E527 each contribute to the Ca(2+) site.

Belongs to the transglutaminase superfamily. Transglutaminase family. Ca(2+) serves as cofactor. As to expression, mainly expressed in hemocytes, hepatopancreas, and gastric tissues. On the other hand nothing was detected in the heart, intestine and muscle.

It localises to the membrane. It carries out the reaction L-glutaminyl-[protein] + L-lysyl-[protein] = [protein]-L-lysyl-N(6)-5-L-glutamyl-[protein] + NH4(+). Functionally, catalyzes the cross-linking of proteins and the conjugation of polyamines to proteins. The polypeptide is Hemocyte protein-glutamine gamma-glutamyltransferase (Tachypleus tridentatus (Japanese horseshoe crab)).